The chain runs to 156 residues: Cyclic pyranopterin monophosphate synthase (156 aa).

Substrate contacts are provided by residues 73 to 75 (LCH) and 110 to 111 (ME). Asp-125 is an active-site residue.

This sequence belongs to the MoaC family. As to quaternary structure, homohexamer; trimer of dimers.

The enzyme catalyses (8S)-3',8-cyclo-7,8-dihydroguanosine 5'-triphosphate = cyclic pyranopterin phosphate + diphosphate. It participates in cofactor biosynthesis; molybdopterin biosynthesis. In terms of biological role, catalyzes the conversion of (8S)-3',8-cyclo-7,8-dihydroguanosine 5'-triphosphate to cyclic pyranopterin monophosphate (cPMP). The sequence is that of Cyclic pyranopterin monophosphate synthase from Pseudomonas putida (strain W619).